We begin with the raw amino-acid sequence, 137 residues long: Large ribosomal subunit protein uL16 (137 aa).

It belongs to the universal ribosomal protein uL16 family. Part of the 50S ribosomal subunit.

In terms of biological role, binds 23S rRNA and is also seen to make contacts with the A and possibly P site tRNAs. The sequence is that of Large ribosomal subunit protein uL16 from Lactococcus lactis subsp. lactis (strain IL1403) (Streptococcus lactis).